The following is a 334-amino-acid chain: Anthranilate phosphoribosyltransferase (334 aa).

Residues Gly79, 82–83, Ser87, 89–92, 107–115, and Ser119 each bind 5-phospho-alpha-D-ribose 1-diphosphate; these read GD, NIST, and KHGNRSISS. Gly79 provides a ligand contact to anthranilate. Position 91 (Ser91) interacts with Mg(2+). Anthranilate is bound at residue Asn110. Residue Arg165 participates in anthranilate binding. Mg(2+)-binding residues include Asp224 and Glu225.

Belongs to the anthranilate phosphoribosyltransferase family. In terms of assembly, homodimer. It depends on Mg(2+) as a cofactor.

The enzyme catalyses N-(5-phospho-beta-D-ribosyl)anthranilate + diphosphate = 5-phospho-alpha-D-ribose 1-diphosphate + anthranilate. The protein operates within amino-acid biosynthesis; L-tryptophan biosynthesis; L-tryptophan from chorismate: step 2/5. In terms of biological role, catalyzes the transfer of the phosphoribosyl group of 5-phosphorylribose-1-pyrophosphate (PRPP) to anthranilate to yield N-(5'-phosphoribosyl)-anthranilate (PRA). The sequence is that of Anthranilate phosphoribosyltransferase from Streptococcus pneumoniae (strain ATCC 700669 / Spain 23F-1).